A 37-amino-acid polypeptide reads, in one-letter code: Antifungal protein S (37 aa).

This sequence belongs to the thaumatin family.

In terms of biological role, has antifungal activity. Inhibits the growth of Trichoderma viridae and Candida albicans. This chain is Antifungal protein S, found in Hordeum vulgare (Barley).